We begin with the raw amino-acid sequence, 123 residues long: MALLKISVVVPEGEVYTGEVKSVVLPGVEGEFGVLYGHSNMITLLQAGVIEIETENQKEHIAINWGYAEVTKERVDILADGAVFIKKGSDDRDDAISRAKKLLEDASSDRLAVSSVLAKIESL.

The protein belongs to the ATPase epsilon chain family. In terms of assembly, F-type ATPases have 2 components, CF(1) - the catalytic core - and CF(0) - the membrane proton channel. CF(1) has five subunits: alpha(3), beta(3), gamma(1), delta(1), epsilon(1). CF(0) has three main subunits: a, b and c.

The protein resides in the cell inner membrane. Functionally, produces ATP from ADP in the presence of a proton gradient across the membrane. This is ATP synthase epsilon chain from Helicobacter pylori (strain Shi470).